Consider the following 181-residue polypeptide: Large ribosomal subunit protein uL5 (181 aa).

It belongs to the universal ribosomal protein uL5 family. As to quaternary structure, part of the 50S ribosomal subunit; part of the 5S rRNA/L5/L18/L25 subcomplex. Contacts the 5S rRNA and the P site tRNA. Forms a bridge to the 30S subunit in the 70S ribosome.

Functionally, this is one of the proteins that bind and probably mediate the attachment of the 5S RNA into the large ribosomal subunit, where it forms part of the central protuberance. In the 70S ribosome it contacts protein S13 of the 30S subunit (bridge B1b), connecting the 2 subunits; this bridge is implicated in subunit movement. Contacts the P site tRNA; the 5S rRNA and some of its associated proteins might help stabilize positioning of ribosome-bound tRNAs. The polypeptide is Large ribosomal subunit protein uL5 (Acaryochloris marina (strain MBIC 11017)).